The primary structure comprises 523 residues: 2-isopropylmalate synthase (523 aa).

One can recognise a Pyruvate carboxyltransferase domain in the interval 5-267 (VIIFDTTLRD…HTAINHQEIW (263 aa)). Positions 14, 202, 204, and 238 each coordinate Mn(2+). A regulatory domain region spans residues 392 to 523 (RLDYFSVQSG…QHNENNKETV (132 aa)).

Belongs to the alpha-IPM synthase/homocitrate synthase family. LeuA type 1 subfamily. As to quaternary structure, homodimer. Mn(2+) serves as cofactor.

Its subcellular location is the cytoplasm. It catalyses the reaction 3-methyl-2-oxobutanoate + acetyl-CoA + H2O = (2S)-2-isopropylmalate + CoA + H(+). It participates in amino-acid biosynthesis; L-leucine biosynthesis; L-leucine from 3-methyl-2-oxobutanoate: step 1/4. Its function is as follows. Catalyzes the condensation of the acetyl group of acetyl-CoA with 3-methyl-2-oxobutanoate (2-ketoisovalerate) to form 3-carboxy-3-hydroxy-4-methylpentanoate (2-isopropylmalate). This Escherichia coli O81 (strain ED1a) protein is 2-isopropylmalate synthase.